A 248-amino-acid polypeptide reads, in one-letter code: PF03932 family protein CutC (248 aa).

It belongs to the CutC family. Homodimer.

The protein localises to the cytoplasm. This is PF03932 family protein CutC from Escherichia coli O81 (strain ED1a).